The following is a 435-amino-acid chain: ATP-dependent protease ATPase subunit HslU (435 aa).

Residues Val18, 60–65 (GCGKTE), Asp248, Glu313, and Arg385 contribute to the ATP site.

The protein belongs to the ClpX chaperone family. HslU subfamily. In terms of assembly, a double ring-shaped homohexamer of HslV is capped on each side by a ring-shaped HslU homohexamer. The assembly of the HslU/HslV complex is dependent on binding of ATP.

The protein resides in the cytoplasm. ATPase subunit of a proteasome-like degradation complex; this subunit has chaperone activity. The binding of ATP and its subsequent hydrolysis by HslU are essential for unfolding of protein substrates subsequently hydrolyzed by HslV. HslU recognizes the N-terminal part of its protein substrates and unfolds these before they are guided to HslV for hydrolysis. This chain is ATP-dependent protease ATPase subunit HslU, found in Beijerinckia indica subsp. indica (strain ATCC 9039 / DSM 1715 / NCIMB 8712).